A 1250-amino-acid chain; its full sequence is SRC kinase signaling inhibitor 1 (1250 aa).

Residues 19–45 (AEGRARSPREEVGPRDPGGRGEPDPER) are compositionally biased toward basic and acidic residues. A disordered region spans residues 19–78 (AEGRARSPREEVGPRDPGGRGEPDPERSSPPMLSADDAEYPREYRTLGGGGGGGSGGRRF). Residues serine 47 and serine 52 each carry the phosphoserine modification. The span at 65–75 (LGGGGGGGSGG) shows a compositional bias: gly residues. Position 79 is a phosphoserine (serine 79). Threonine 86 is modified (phosphothreonine). Phosphoserine is present on residues serine 87, serine 98, serine 211, serine 233, serine 237, serine 247, and serine 293. At tyrosine 309 the chain carries Phosphotyrosine. The interval 352–448 (ASRESSPTRR…RRDVKPDEDL (97 aa)) is disordered. Residues 354–364 (RESSPTRRLNN) show a composition bias toward polar residues. Over residues 365–374 (LSPASHLASS) the composition is skewed to low complexity. Phosphoserine is present on residues serine 366, serine 375, and serine 392. A compositionally biased stretch (low complexity) spans 381–399 (PSGLPSGLPSGSPSRSRLS). Arginine 397 and arginine 404 each carry omega-N-methylarginine. 3 positions are modified to phosphoserine: serine 411, serine 430, and serine 432. The span at 437-448 (LERRDVKPDEDL) shows a compositional bias: basic and acidic residues. Tyrosine 464 carries the phosphotyrosine modification. The disordered stretch occupies residues 538-710 (PSSPQKLADV…ASSTPAGQPT (173 aa)). The span at 552-563 (GGPPPPHSPYSG) shows a compositional bias: pro residues. Serine 559, serine 562, and serine 566 each carry phosphoserine. Arginine 567 carries the post-translational modification Omega-N-methylarginine. Phosphoserine is present on residues serine 569, serine 579, serine 581, serine 583, and serine 588. Low complexity predominate over residues 590–607 (GGKARSTGSASTAGAPPS). Basic and acidic residues predominate over residues 628–640 (KDTETRERMEAME). Residues serine 664 and serine 688 each carry the phosphoserine modification. Phosphothreonine is present on residues threonine 691 and threonine 704. The segment covering 701-710 (ASSTPAGQPT) has biased composition (low complexity). 2 coiled-coil regions span residues 712-753 (VSRL…RALL) and 793-813 (EELITQQLNDLEKSVEKIQRD). Residues 714-764 (RLQMQLHLRGLQNSASDLRGQLQQLRNVQLQNQESVRALLKPTEADVSMRV) form an interaction with SNAP25 region. Phosphoserine is present on residues serine 911 and serine 933. 2 disordered regions span residues 924–982 (GLDF…ERDW) and 1016–1094 (DCAS…TGEV). Position 951 is a phosphothreonine (threonine 951). A Phosphoserine modification is found at serine 1054. Over residues 1069 to 1078 (KSPPPPPPRR) the composition is skewed to pro residues. Phosphoserine occurs at positions 1110 and 1127. The interval 1155 to 1250 (ELESGGSSVP…FGARNSSISF (96 aa)) is disordered. Polar residues predominate over residues 1217 to 1250 (PNETSSPGSEKPSGSRTSIPVLTSFGARNSSISF).

Belongs to the SRCIN1 family. In terms of assembly, interacts with the N-terminal coiled-coil region of SNAP25. Interacts with BCAR1/p130Cas and SRC through its C-terminal domain. Interacts with CSK, CTTN, SORBS3/vinexin, SYP and MAPRE3/EB3. In terms of processing, tyrosine-phosphorylated in response to EGF and to cell adhesion to integrin ligands. As to expression, expressed predominantly in central nervous system with high levels detected in cortex, cerebellum, midbrain and spinal cord (at protein level). Also expressed in testis and epithelial-rich tissues such as mammary gland, lung and kidney.

It is found in the cytoplasm. The protein localises to the cytoskeleton. The protein resides in the cell projection. Its subcellular location is the axon. It localises to the dendrite. It is found in the presynapse. The protein localises to the postsynapse. The protein resides in the postsynaptic density. Its function is as follows. Acts as a negative regulator of SRC by activating CSK which inhibits SRC activity and downstream signaling, leading to impaired cell spreading and migration. Regulates dendritic spine morphology. Involved in calcium-dependent exocytosis. May play a role in neurotransmitter release or synapse maintenance. This chain is SRC kinase signaling inhibitor 1 (Srcin1), found in Mus musculus (Mouse).